The primary structure comprises 900 residues: DNA mismatch repair protein MutS (900 aa).

637–644 (GPNMAGKS) contacts ATP.

This sequence belongs to the DNA mismatch repair MutS family.

Functionally, this protein is involved in the repair of mismatches in DNA. It is possible that it carries out the mismatch recognition step. This protein has a weak ATPase activity. The chain is DNA mismatch repair protein MutS from Methanosarcina acetivorans (strain ATCC 35395 / DSM 2834 / JCM 12185 / C2A).